The chain runs to 229 residues: Ribose-5-phosphate isomerase A (229 aa).

Residues 28 to 31, 85 to 88, and 98 to 101 each bind substrate; these read TGST, DGAD, and KGRG. The active-site Proton acceptor is Glu107. Lys125 contacts substrate.

Belongs to the ribose 5-phosphate isomerase family. As to quaternary structure, homodimer.

The enzyme catalyses aldehydo-D-ribose 5-phosphate = D-ribulose 5-phosphate. The protein operates within carbohydrate degradation; pentose phosphate pathway; D-ribose 5-phosphate from D-ribulose 5-phosphate (non-oxidative stage): step 1/1. In terms of biological role, catalyzes the reversible conversion of ribose-5-phosphate to ribulose 5-phosphate. This chain is Ribose-5-phosphate isomerase A, found in Thermococcus kodakarensis (strain ATCC BAA-918 / JCM 12380 / KOD1) (Pyrococcus kodakaraensis (strain KOD1)).